Here is a 303-residue protein sequence, read N- to C-terminus: HTH-type transcriptional regulator LysG (303 aa).

The HTH lysR-type domain maps to leucine 6–threonine 62. The H-T-H motif DNA-binding region spans phenylalanine 23–lysine 42.

The protein belongs to the LysR transcriptional regulatory family. As to quaternary structure, homodimer.

Positively regulates the expression of the exporter LysE and represses its own expression. The polypeptide is HTH-type transcriptional regulator LysG (Mycobacterium bovis (strain ATCC BAA-935 / AF2122/97)).